The sequence spans 304 residues: PTB domain-containing engulfment adapter protein 1 (304 aa).

Residue threonine 16 is modified to Phosphothreonine. In terms of domain architecture, PID spans 21-176 (SKHFIPYNAK…AGLQKRIQDL (156 aa)). Positions 158–202 (KDVETRKQIAGLQKRIQDLETENMELKNKVQDLENQLRITQVSAP) form a coiled coil. Serine 223 is subject to Phosphoserine. A disordered region spans residues 223–246 (SPISHQSSMPTRNGTQPPPVPSRS). The segment covering 225–237 (ISHQSSMPTRNGT) has biased composition (polar residues).

Belongs to the ced-6 family. Homodimer. Interacts with clathrin. Interacts with GDP-bound ARF6, but not with GTP-bound ARF6. Part of a complex composed of GULP1, ACAP1 and ARF6. Interacts with ACAP1, LRP1, MEGF10 and STAB2. As to expression, widely expressed. Detected in macrophages, pancreas, kidney, skeletal muscle, heart, colon, intestine, lung, placenta and ovary.

The protein localises to the cytoplasm. May function as an adapter protein. Required for efficient phagocytosis of apoptotic cells. Modulates cellular glycosphingolipid and cholesterol transport. May play a role in the internalization and endosomal trafficking of various LRP1 ligands, such as PSAP. Increases cellular levels of GTP-bound ARF6. In Homo sapiens (Human), this protein is PTB domain-containing engulfment adapter protein 1 (GULP1).